A 386-amino-acid polypeptide reads, in one-letter code: Enoyl-[acyl-carrier-protein] reductase 1, mitochondrial (386 aa).

Residues 1 to 22 constitute a mitochondrion transit peptide; it reads MYSVLKQSIRPRLLATHNQFRT. Tyr79 functions as the Proton donor in the catalytic mechanism. NADP(+) contacts are provided by residues Asn172, 199-202, 222-224, 296-299, 321-323, and Lys381; these read TSAV, RDR, YGGM, and FWV.

This sequence belongs to the zinc-containing alcohol dehydrogenase family. Quinone oxidoreductase subfamily. Homodimer and heterodimer with ETR2.

Its subcellular location is the mitochondrion. It catalyses the reaction a 2,3-saturated acyl-[ACP] + NADP(+) = a (2E)-enoyl-[ACP] + NADPH + H(+). The catalysed reaction is (2E,4E)-hexadienoyl-CoA + NADPH + H(+) = (4E)-hexenoyl-CoA + NADP(+). The enzyme catalyses (2E)-hexenoyl-CoA + NADPH + H(+) = hexanoyl-CoA + NADP(+). Catalyzes the NADPH-dependent reduction of trans-2-enoyl thioesters in mitochondrial fatty acid synthesis (fatty acid synthesis type II). Fatty acid chain elongation in mitochondria uses acyl carrier protein (ACP) as an acyl group carrier, but the enzyme accepts both ACP and CoA thioesters as substrates in vitro. Required for respiration and the maintenance of the mitochondrial compartment. The chain is Enoyl-[acyl-carrier-protein] reductase 1, mitochondrial (ETR1) from Candida tropicalis (Yeast).